The chain runs to 1229 residues: Vacuolar protein sorting-associated protein 8 homolog (1229 aa).

A disordered region spans residues 67–89 (EFGMPVPHATPTPSIGEDSTIRT). One copy of the CHCR repeat lies at 901 to 1063 (ETTRLLSLHY…ILPHQELQSI (163 aa)). An RING-type; atypical zinc finger spans residues 1148–1189 (CSMCRQRLYDHSQVLIFGGCGHGIHEQCMEESETQFEECPRC).

This sequence belongs to the VPS8 family. As to quaternary structure, component of the class C core vacuole/endosome tethering (CORVET) complex composed of at least Vps8, dor/Vps18, car/Vps33A and Vps16A; unlike in other species, Vps11 is not part of the Drosophila complex. Due to the reduced number of components the Drosophila CORVET complex is often referred to as the miniCORVET complex. Has a higher affinity than the homotypic fusion and vacuole protein sorting (HOPS) tethering complex-specific component lt/Vps41 for Vps16A, car/Vps33A and dor/Vps18, the core components shared by both tethering complexes.

Its subcellular location is the early endosome. Functionally, part of the class C core vacuole/endosome tethering (CORVET) complex involved in endo-lysosomal vesicle trafficking and lysosome biogenesis by facilitating docking and fusion of endosomal vesicles. The CORVET complex acts upstream of the homotypic fusion and vacuole protein sorting (HOPS) tethering complex but is not involved in autophagic flux. The CORVET complex may cooperate with the early endosomal tether Rbsn-5 to mediate endosomal fusion. As part of the CORVET complex recruited to endosomes by activated GTP-bound Rab5. Specifically required for endocytic trafficking in a subset of cells, such as hemocytes and nephrocytes, which are highly active in endocytosis. In Drosophila melanogaster (Fruit fly), this protein is Vacuolar protein sorting-associated protein 8 homolog.